Reading from the N-terminus, the 147-residue chain is Formiminotransferase N-terminal subdomain-containing protein (147 aa).

The N-terminal stretch at Met-1–Ala-20 is a signal peptide.

It belongs to the formiminotransferase family. In terms of tissue distribution, widely expressed with highest levels in liver and skeletal muscle, and moderate levels in kidney, bone and pancreas.

This chain is Formiminotransferase N-terminal subdomain-containing protein (FTCDNL1), found in Homo sapiens (Human).